The chain runs to 294 residues: Acetylglutamate kinase (294 aa).

Substrate is bound by residues 60–61 (GG), Arg-82, and Asn-186.

The protein belongs to the acetylglutamate kinase family. ArgB subfamily.

The protein localises to the cytoplasm. The enzyme catalyses N-acetyl-L-glutamate + ATP = N-acetyl-L-glutamyl 5-phosphate + ADP. It functions in the pathway amino-acid biosynthesis; L-arginine biosynthesis; N(2)-acetyl-L-ornithine from L-glutamate: step 2/4. Catalyzes the ATP-dependent phosphorylation of N-acetyl-L-glutamate. The sequence is that of Acetylglutamate kinase from Methanospirillum hungatei JF-1 (strain ATCC 27890 / DSM 864 / NBRC 100397 / JF-1).